Consider the following 181-residue polypeptide: Probable pyruvoyl-dependent arginine decarboxylase (181 aa).

Serine 43 bears the Pyruvic acid (Ser) mark.

The protein belongs to the PdaD family. Pyruvate is required as a cofactor.

It carries out the reaction L-arginine + H(+) = agmatine + CO2. This is Probable pyruvoyl-dependent arginine decarboxylase from Chlorobaculum tepidum (strain ATCC 49652 / DSM 12025 / NBRC 103806 / TLS) (Chlorobium tepidum).